An 880-amino-acid chain; its full sequence is Probable receptor-like protein kinase At5g38990 (880 aa).

The signal sequence occupies residues 1-21 (MICHVLVIFTILVSAVVDATA). The Extracellular portion of the chain corresponds to 22 to 440 (SYEPTDVFLI…GKGKSSHVLP (419 aa)). N-linked (GlcNAc...) asparagine glycans are attached at residues Asn-46, Asn-136, Asn-158, Asn-210, Asn-256, Asn-263, Asn-297, and Asn-324. The helical transmembrane segment at 441 to 461 (IIIAVVGSAVALAFFVLVVVL) threads the bilayer. Residues 462–880 (VVMKRKKKSN…FSEINEPKAR (419 aa)) are Cytoplasmic-facing. The disordered stretch occupies residues 471-505 (NESSVDTTNKPSTNSSWGPLLHGTGSTNTKSASSL). Composition is skewed to polar residues over residues 472-487 (ESSVDTTNKPSTNSSW) and 494-505 (TGSTNTKSASSL). The 286-residue stretch at 525–810 (FEEKLIIGVG…EFALQLHETA (286 aa)) folds into the Protein kinase domain. Residues 531–539 (IGVGGFGSV) and Lys-554 each bind ATP. The active-site Proton acceptor is Asp-653. Positions 820 to 846 (LDLMPSGEVGTTTDGEDDLFSRTTGHV) are disordered.

It belongs to the protein kinase superfamily. Ser/Thr protein kinase family.

Its subcellular location is the membrane. The chain is Probable receptor-like protein kinase At5g38990 from Arabidopsis thaliana (Mouse-ear cress).